The sequence spans 504 residues: MTTNTEKYILALDLGTTGNRAILFNSQGASVAQAYKELSQYYPHPGWLEHNAEEIWEDTYAMIKDVFRDTGVSSSNVEAIGLTVQRETCLLWDKTTGKPLHKAIVWQDRRTASLCQELAAKGEAEKIKTRTGLVLDAYFSATKLSWLLDWVKEEKPNLDLKNVLAGTIDTWVLWKLTGGKVHATDHSNASRTMLMNIESLNWDQELLDLFQIPREMMPQIQPSFSIFGKSEPDLLGGSIPIAAVLGDQQAALFAHGCNFPGMSKCTYGTGSFLIANTGNHVTKSQNQLLSTIAWTQLVKGKLQATYALEGAMFTTGACIQWLRDGIKLIDSVAETENLALQVEDTNGVYFVPALSGLGAPHWDMDARGAILGITGGVQRENIIRAVLESIAFQVKEVVDAVNKDSGIPMSHLKVDGGVSQNNFLMQYQANLLGIPVERPAFIDATAQGAAFAAGLTIGLWNNYQKLLSNNKVGQVFEPNKNATKVQESFVVWQKAVSRAKNWIN.

Residue threonine 16 participates in ADP binding. 2 residues coordinate ATP: threonine 16 and threonine 17. Threonine 16 contributes to the sn-glycerol 3-phosphate binding site. Position 20 (arginine 20) interacts with ADP. 4 residues coordinate sn-glycerol 3-phosphate: arginine 86, glutamate 87, tyrosine 138, and aspartate 247. Positions 86, 87, 138, 247, and 248 each coordinate glycerol. The ADP site is built by threonine 269 and glycine 316. Residues threonine 269, glycine 316, glutamine 320, and glycine 417 each contribute to the ATP site. Positions 417 and 421 each coordinate ADP.

It belongs to the FGGY kinase family.

It catalyses the reaction glycerol + ATP = sn-glycerol 3-phosphate + ADP + H(+). It functions in the pathway polyol metabolism; glycerol degradation via glycerol kinase pathway; sn-glycerol 3-phosphate from glycerol: step 1/1. Inhibited by fructose 1,6-bisphosphate (FBP). Its function is as follows. Key enzyme in the regulation of glycerol uptake and metabolism. Catalyzes the phosphorylation of glycerol to yield sn-glycerol 3-phosphate. The chain is Glycerol kinase from Trichodesmium erythraeum (strain IMS101).